Consider the following 190-residue polypeptide: Large ribosomal subunit protein bL25 (190 aa).

The disordered stretch occupies residues 1–20 (MSEQKTLSVQKRDNLGKGAN).

This sequence belongs to the bacterial ribosomal protein bL25 family. CTC subfamily. As to quaternary structure, part of the 50S ribosomal subunit; part of the 5S rRNA/L5/L18/L25 subcomplex. Contacts the 5S rRNA. Binds to the 5S rRNA independently of L5 and L18.

Functionally, this is one of the proteins that binds to the 5S RNA in the ribosome where it forms part of the central protuberance. This chain is Large ribosomal subunit protein bL25, found in Nitratidesulfovibrio vulgaris (strain ATCC 29579 / DSM 644 / CCUG 34227 / NCIMB 8303 / VKM B-1760 / Hildenborough) (Desulfovibrio vulgaris).